Reading from the N-terminus, the 387-residue chain is Probable purine permease 6 (387 aa).

The segment at 1 to 24 is disordered; the sequence is MMELESETQELHLHVNGEPEGKFS. A compositionally biased stretch (basic and acidic residues) spans 9 to 24; that stretch reads QELHLHVNGEPEGKFS. The next 10 membrane-spanning stretches (helical) occupy residues 36–56, 68–88, 106–126, 129–149, 162–182, 201–221, 238–258, 283–303, 309–329, and 333–353; these read LRVSLYVTLLLAGETIATLLG, WLETLVQLVGFPLTLPCYYYL, FLTLSLVYIGLGLLVAGHCIL, FGLLYLPVSTFSLISASQLAF, ITPFILNSLVLLTISSTLLVI, YVIGYICAVGSSAGYSLVLSL, ILDMATYPSMVATCVVVVGLF, INIGSTISWQACLIGSVGLII, FSNVISTLCLPVVPVLAVVFF, and MSGIKLVAMFLAIWGFVSYGY. A disordered region spans residues 362–387; it reads PEEDQELPQSKEEEEQKQVDTIHVQA. Over residues 370–381 the composition is skewed to basic and acidic residues; that stretch reads QSKEEEEQKQVD.

This sequence belongs to the purine permeases (TC 2.A.7.14) family.

It is found in the membrane. The polypeptide is Probable purine permease 6 (PUP6) (Arabidopsis thaliana (Mouse-ear cress)).